A 560-amino-acid polypeptide reads, in one-letter code: DNA ligase B (560 aa).

K124 functions as the N6-AMP-lysine intermediate in the catalytic mechanism.

This sequence belongs to the NAD-dependent DNA ligase family. LigB subfamily.

It catalyses the reaction NAD(+) + (deoxyribonucleotide)n-3'-hydroxyl + 5'-phospho-(deoxyribonucleotide)m = (deoxyribonucleotide)n+m + AMP + beta-nicotinamide D-nucleotide.. Its function is as follows. Catalyzes the formation of phosphodiester linkages between 5'-phosphoryl and 3'-hydroxyl groups in double-stranded DNA using NAD as a coenzyme and as the energy source for the reaction. The protein is DNA ligase B of Escherichia coli O81 (strain ED1a).